Here is a 675-residue protein sequence, read N- to C-terminus: MHHVNKYFNQTMVIEALKMSFYKLNPKQLIKNPIMFVVEVGMILTLILICFPDIFGTSYLSRGYLITIFIILLITILFANFSEAFAEGRGKAQADSLRQAQSNLTARLIEENGAYRIVNATELKAGQNIRVENGETIPADGVVINGLATVDESAITGESAPVIKESGGDFDGVIGGTLVTSDWLEIRVESEAGTSFLDKMIALVEGAERNKTPNEIALFTLLTTLTIIFLVVIVTLYPIASYLHLILPIAMLIALTVCLIPTTIGGLLSAIGIAGMDRVTQFNVLAKSGRAVEVCGDVDVMILDKTGTITYGNRIASEFLPVNQQMLEKLIVAAYMSSIYDDTPEGKSIVRLAKQMYINELPKDIDGTYKTFTAETRMSGIITNEISVFKGAPNSMINLVKQQQGNIPLNIESLCMDVSSKGGTPLIVIENNVMLGVIYLKDVIKDGLVERFTELRKMGIETVMCTGDNALTAATIAKEAGVDRFVAECKPEDKIKVIKDEQAKGHIVAMTGDGTNDAPALAQANIGLAMNSGTISAKEAANLIDLDSNPTKLIEVVKIGKQLLMTRGALTTFSLANDVAKYFAILPALMMSTIPEMTSLNIMHLSSPKSAIISALIFNALIIVALIPIAMKGVKVKGYSIDRIFINNMLIYGLGGLIVPFLGIKLIDMIVQFFV.

Helical transmembrane passes span 34-54, 65-85, 216-236, and 245-265; these read IMFV…FPDI, LITI…SEAF, IALF…IVTL, and LILP…TTIG. The 4-aspartylphosphate intermediate role is filled by Asp-304. ATP is bound by residues Asp-341, Glu-345, 372-379, and Lys-390; that span reads FTAETRMS. Mg(2+) contacts are provided by Asp-513 and Asp-517. 3 consecutive transmembrane segments (helical) span residues 569-591, 611-631, and 644-664; these read ALTT…ALMM, AIIS…PIAM, and IFIN…FLGI.

It belongs to the cation transport ATPase (P-type) (TC 3.A.3) family. Type IA subfamily. In terms of assembly, the system is composed of three essential subunits: KdpA, KdpB and KdpC.

The protein resides in the cell membrane. The enzyme catalyses K(+)(out) + ATP + H2O = K(+)(in) + ADP + phosphate + H(+). In terms of biological role, part of the high-affinity ATP-driven potassium transport (or Kdp) system, which catalyzes the hydrolysis of ATP coupled with the electrogenic transport of potassium into the cytoplasm. This subunit is responsible for energy coupling to the transport system and for the release of the potassium ions to the cytoplasm. This Staphylococcus aureus (strain MSSA476) protein is Potassium-transporting ATPase ATP-binding subunit.